We begin with the raw amino-acid sequence, 411 residues long: Argininosuccinate synthase (411 aa).

Residues 15-23 and Ala42 each bind ATP; that span reads AYSGGLDTS. L-citrulline-binding residues include Tyr93 and Ser98. An ATP-binding site is contributed by Gly123. Residues Thr125, Asn129, and Asp130 each coordinate L-aspartate. Asn129 lines the L-citrulline pocket. L-citrulline contacts are provided by Arg133, Ser185, Ser194, Glu270, and Tyr282.

This sequence belongs to the argininosuccinate synthase family. Type 1 subfamily. Homotetramer.

Its subcellular location is the cytoplasm. It catalyses the reaction L-citrulline + L-aspartate + ATP = 2-(N(omega)-L-arginino)succinate + AMP + diphosphate + H(+). It functions in the pathway amino-acid biosynthesis; L-arginine biosynthesis; L-arginine from L-ornithine and carbamoyl phosphate: step 2/3. The protein is Argininosuccinate synthase of Psychrobacter sp. (strain PRwf-1).